The sequence spans 441 residues: Mitochondrial distribution and morphology protein 12 (441 aa).

One can recognise an SMP-LTD domain in the interval 1-441; that stretch reads MSIDIDWERA…VYPSFWTFLV (441 aa). The interval 180–289 is disordered; that stretch reads TPLRAVTRGN…SGTPPRRMRE (110 aa). Polar residues-rich tracts occupy residues 226 to 245 and 253 to 263; these read SRPSTANTGNTLFSRGSVST and SSQTVLANNPG.

It belongs to the MDM12 family. Component of the ER-mitochondria encounter structure (ERMES) or MDM complex, composed of MMM1, MDM10, MDM12 and MDM34. An MMM1 homodimer associates with one molecule of MDM12 on each side in a pairwise head-to-tail manner, and the SMP-LTD domains of MMM1 and MDM12 generate a continuous hydrophobic tunnel for phospholipid trafficking.

Its subcellular location is the mitochondrion outer membrane. The protein localises to the endoplasmic reticulum membrane. Its function is as follows. Component of the ERMES/MDM complex, which serves as a molecular tether to connect the endoplasmic reticulum (ER) and mitochondria. Components of this complex are involved in the control of mitochondrial shape and protein biogenesis, and function in nonvesicular lipid trafficking between the ER and mitochondria. MDM12 is required for the interaction of the ER-resident membrane protein MMM1 and the outer mitochondrial membrane-resident beta-barrel protein MDM10. The MDM12-MMM1 subcomplex functions in the major beta-barrel assembly pathway that is responsible for biogenesis of all mitochondrial outer membrane beta-barrel proteins, and acts in a late step after the SAM complex. The MDM10-MDM12-MMM1 subcomplex further acts in the TOM40-specific pathway after the action of the MDM12-MMM1 complex. Essential for establishing and maintaining the structure of mitochondria and maintenance of mtDNA nucleoids. The sequence is that of Mitochondrial distribution and morphology protein 12 from Paracoccidioides brasiliensis (strain Pb18).